The following is a 759-amino-acid chain: uncharacterized protein (759 aa).

Disordered stretches follow at residues 269–328 and 406–759; these read SQRV…GEEP and LPLR…AQTA. The segment covering 289-299 has biased composition (basic and acidic residues); the sequence is AGGKEEAERGG. The span at 406 to 415 shows a compositional bias: low complexity; sequence LPLRPPSGSG. The span at 417–430 shows a compositional bias: basic and acidic residues; sequence AARKPGYEKEEGRG. Residues 431-444 show a composition bias toward low complexity; sequence RATTASATAATSPR. Basic and acidic residues-rich tracts occupy residues 469–518 and 525–545; these read PESE…RGEH and DSGR…EKGT. A compositionally biased stretch (pro residues) spans 585–599; it reads WVPPPHLLFPSPLPS. Low complexity predominate over residues 659-680; sequence SLSSLSSSSSSSSSSSPSYSPS. Positions 681–690 are enriched in pro residues; sequence PLSPPSPVSP. Low complexity-rich tracts occupy residues 691 to 704 and 728 to 746; these read SSPR…IRSP and PPFS…PSAP.

This is an uncharacterized protein from Human herpesvirus 6B (strain Z29) (HHV-6 variant B).